The primary structure comprises 301 residues: MNWITNYVRPRINSMLGRREVPENLWIKCPETGEMVFHKDLEGNKWVIPASGYHMKMPAKARLADLFDNGEFESLPQPKVAQDPLKFRDSKKYSDRLRDSRLKTEQEDTILAGVGKVQGLKLVAVVHEFNFIGGSLGMAAGEAIVKAFERATAEKCPLVMFPASGGARMQEGILSLMQLPRTTVAVDMLKESGQPYIVVLTNPTTGGVTASYAMLGDIHLAEPGAEIGFAGKRVIEQTLREKLPEGFQTSEYLLEHGMVDMVVKRHDIPETLARLLKILTKKPVSAANDMNSGAIALAASA.

Positions 25–294 constitute a CoA carboxyltransferase N-terminal domain; sequence LWIKCPETGE…SAANDMNSGA (270 aa).

The protein belongs to the AccD/PCCB family. Acetyl-CoA carboxylase is a heterohexamer composed of biotin carboxyl carrier protein (AccB), biotin carboxylase (AccC) and two subunits each of ACCase subunit alpha (AccA) and ACCase subunit beta (AccD).

Its subcellular location is the cytoplasm. It catalyses the reaction N(6)-carboxybiotinyl-L-lysyl-[protein] + acetyl-CoA = N(6)-biotinyl-L-lysyl-[protein] + malonyl-CoA. Its pathway is lipid metabolism; malonyl-CoA biosynthesis; malonyl-CoA from acetyl-CoA: step 1/1. Component of the acetyl coenzyme A carboxylase (ACC) complex. Biotin carboxylase (BC) catalyzes the carboxylation of biotin on its carrier protein (BCCP) and then the CO(2) group is transferred by the transcarboxylase to acetyl-CoA to form malonyl-CoA. The polypeptide is Acetyl-coenzyme A carboxylase carboxyl transferase subunit beta (Rhizobium leguminosarum bv. trifolii (strain WSM1325)).